We begin with the raw amino-acid sequence, 290 residues long: Lipoyl synthase 2 (290 aa).

7 residues coordinate [4Fe-4S] cluster: Cys37, Cys42, Cys48, Cys63, Cys67, Cys70, and Ser283. Residues 49 to 272 (YGQKTATFLL…GNIARELGFS (224 aa)) form the Radical SAM core domain.

This sequence belongs to the radical SAM superfamily. Lipoyl synthase family. It depends on [4Fe-4S] cluster as a cofactor.

The protein resides in the cytoplasm. It catalyses the reaction [[Fe-S] cluster scaffold protein carrying a second [4Fe-4S](2+) cluster] + N(6)-octanoyl-L-lysyl-[protein] + 2 oxidized [2Fe-2S]-[ferredoxin] + 2 S-adenosyl-L-methionine + 4 H(+) = [[Fe-S] cluster scaffold protein] + N(6)-[(R)-dihydrolipoyl]-L-lysyl-[protein] + 4 Fe(3+) + 2 hydrogen sulfide + 2 5'-deoxyadenosine + 2 L-methionine + 2 reduced [2Fe-2S]-[ferredoxin]. Its pathway is protein modification; protein lipoylation via endogenous pathway; protein N(6)-(lipoyl)lysine from octanoyl-[acyl-carrier-protein]: step 2/2. In terms of biological role, catalyzes the radical-mediated insertion of two sulfur atoms into the C-6 and C-8 positions of the octanoyl moiety bound to the lipoyl domains of lipoate-dependent enzymes, thereby converting the octanoylated domains into lipoylated derivatives. The protein is Lipoyl synthase 2 of Thermosynechococcus vestitus (strain NIES-2133 / IAM M-273 / BP-1).